The sequence spans 325 residues: Melanocortin receptor 5 (325 aa).

Residues 1-37 (MNSSSHLTLLDLTLNASEDNILGQNVNNKSSACEDMG) lie on the Extracellular side of the membrane. N-linked (GlcNAc...) asparagine glycosylation is found at asparagine 2, asparagine 15, and asparagine 28. Residues 38–61 (IAVEVFLTLGLVSLLENILVIGAI) traverse the membrane as a helical segment. Over 62–73 (VKNKNLHSPMYF) the chain is Cytoplasmic. A helical transmembrane segment spans residues 74-97 (FVGSLAVADMLVSMSNAWETITIY). The Extracellular portion of the chain corresponds to 98–114 (LINNKHVVIADTFVRHI). Residues 115–138 (DNVFDSMICISVVASMCSLLAIAV) form a helical membrane-spanning segment. Over 139–155 (DRYITIFYALRYHHIMT) the chain is Cytoplasmic. The helical transmembrane segment at 156–179 (ARRSGVIIACIWTFCISCGIVFII) threads the bilayer. Residues 180–186 (YYESKYV) are Extracellular-facing. Residues 187-211 (IVCLISMFFTMLFFMVSLYIHMFLL) traverse the membrane as a helical segment. Topologically, residues 212–239 (ARNHVKRIAASPRYNSVRQRASMKGAIT) are cytoplasmic. Residues 240–265 (LTMLLGIFIVCWSPFFLHLILMISCP) form a helical membrane-spanning segment. The Extracellular segment spans residues 266–273 (QNVYCACF). The helical transmembrane segment at 274–297 (MSYFNMYLILIMCNSVIDPLIYAL) threads the bilayer. Over 298 to 325 (RSQEMRRTFKEIICCHGFRRTCTLLGRY) the chain is Cytoplasmic. Residues cysteine 311 and cysteine 312 are each lipidated (S-palmitoyl cysteine).

This sequence belongs to the G-protein coupled receptor 1 family. Very low expression levels is detected in brain, while high levels are found in adrenals, stomach, lung and spleen.

It localises to the cell membrane. Its function is as follows. Receptor for MSH (alpha, beta and gamma) and ACTH. The activity of this receptor is mediated by G proteins which activate adenylate cyclase. This receptor is a possible mediator of the immunomodulation properties of melanocortins. This Rattus norvegicus (Rat) protein is Melanocortin receptor 5 (Mc5r).